We begin with the raw amino-acid sequence, 82 residues long: Progonadoliberin-3 (82 aa).

Residues 1–23 (MDLSSKTVVQVVMLALIAQVTFS) form the signal peptide. Position 24 is a pyrrolidone carboxylic acid (Q24). G33 bears the Glycine amide mark.

This sequence belongs to the GnRH family.

Its subcellular location is the secreted. Its function is as follows. Stimulates the secretion of gonadotropins. This is Progonadoliberin-3 (gnrh3) from Oncorhynchus masou (Cherry salmon).